Here is a 430-residue protein sequence, read N- to C-terminus: Levansucrase Lscgamma (430 aa).

Residues Trp-60, Asp-61, Ala-147, Arg-217, and Asp-218 each coordinate sucrose. Asp-61 functions as the Nucleophile in the catalytic mechanism. Glu-302 functions as the Proton donor/acceptor in the catalytic mechanism.

This sequence belongs to the glycosyl hydrolase 68 family. In terms of assembly, homodimer.

It catalyses the reaction [6)-beta-D-fructofuranosyl-(2-&gt;](n) alpha-D-glucopyranoside + sucrose = [6)-beta-D-fructofuranosyl-(2-&gt;](n+1) alpha-D-glucopyranoside + D-glucose. Its activity is regulated as follows. Sucrose hydrolase activity is negatively affected by salt concentration. The levan polymerization rate increases sharply in relation to sucrose concentration reaching the maximum at 100 mM sucrose, and then steadily decreases, suggesting a strong inhibition of the activity by the substrate. Catalyzes the synthesis of levan, a fructose polymer, by transferring the fructosyl moiety from sucrose to a growing acceptor molecule. Also displays sucrose hydrolase activity. Can depolymerize the levan produced once substrate is completely exhausted. This is Levansucrase Lscgamma from Pseudomonas syringae pv. actinidiae.